The primary structure comprises 228 residues: Casparian strip membrane protein 2 (228 aa).

At 1–65 (MSTSDAAATV…FRRADRGSRC (65 aa)) the chain is on the cytoplasmic side. Residues 66 to 86 (VALLDLVLRVAAFGPALAAAI) form a helical membrane-spanning segment. Topologically, residues 87-113 (ATGTSDETLSVFTQFFQFHARFDDFPA) are extracellular. Residues 114 to 134 (LLFFMVANAIAAGYLVLSLPF) form a helical membrane-spanning segment. Topologically, residues 135 to 149 (SAVVVLRPQAIGLRH) are cytoplasmic. A helical membrane pass occupies residues 150–170 (LLLICDLIIAALLTAAAAAAA). Residues 171-201 (AIVDLAHSGNQRANWVPICMQFHGFCQRTSG) lie on the Extracellular side of the membrane. A helical transmembrane segment spans residues 202–222 (AVVASFLAVLVLLFLVILAAF). The Cytoplasmic segment spans residues 223-228 (TIRKRC).

This sequence belongs to the Casparian strip membrane proteins (CASP) family. In terms of assembly, homodimer and heterodimers.

The protein resides in the cell membrane. Regulates membrane-cell wall junctions and localized cell wall deposition. Required for establishment of the Casparian strip membrane domain (CSD) and the subsequent formation of Casparian strips, a cell wall modification of the root endodermis that determines an apoplastic barrier between the intraorganismal apoplasm and the extraorganismal apoplasm and prevents lateral diffusion. The sequence is that of Casparian strip membrane protein 2 from Zea mays (Maize).